A 432-amino-acid chain; its full sequence is Adenylosuccinate synthetase (432 aa).

Residues 13 to 19 and 41 to 43 each bind GTP; these read GDEGKGK and GHT. D14 (proton acceptor) is an active-site residue. Residues D14 and G41 each contribute to the Mg(2+) site. IMP contacts are provided by residues 14-17, 39-42, T130, R144, Q225, T240, and R304; these read DEGK and NAGH. The active-site Proton donor is H42. Position 300–306 (300–306) interacts with substrate; sequence ATTGRRR. GTP is bound by residues R306, 332–334, and 415–417; these read KLD and STG.

The protein belongs to the adenylosuccinate synthetase family. Homodimer. The cofactor is Mg(2+).

The protein resides in the cytoplasm. The enzyme catalyses IMP + L-aspartate + GTP = N(6)-(1,2-dicarboxyethyl)-AMP + GDP + phosphate + 2 H(+). Its pathway is purine metabolism; AMP biosynthesis via de novo pathway; AMP from IMP: step 1/2. Plays an important role in the de novo pathway of purine nucleotide biosynthesis. Catalyzes the first committed step in the biosynthesis of AMP from IMP. This is Adenylosuccinate synthetase from Shigella flexneri serotype 5b (strain 8401).